Reading from the N-terminus, the 159-residue chain is Dihydrofolate reductase (159 aa).

Residues 2-157 enclose the DHFR domain; that stretch reads TLSILVAHDL…IPHTFLHLIR (156 aa). 6–8 serves as a coordination point for substrate; sequence LVA. NADP(+) contacts are provided by residues 7 to 8 and 15 to 20; these read VA and IGFENQ. D28 contributes to the substrate binding site. An NADP(+)-binding site is contributed by 44–47; the sequence is GRKT. A substrate-binding site is contributed by R58. Residues 63 to 66 and 93 to 98 each bind NADP(+); these read LTSD and FGGQIL. T112 is a substrate binding site.

The protein belongs to the dihydrofolate reductase family.

It carries out the reaction (6S)-5,6,7,8-tetrahydrofolate + NADP(+) = 7,8-dihydrofolate + NADPH + H(+). The protein operates within cofactor biosynthesis; tetrahydrofolate biosynthesis; 5,6,7,8-tetrahydrofolate from 7,8-dihydrofolate: step 1/1. Functionally, key enzyme in folate metabolism. Catalyzes an essential reaction for de novo glycine and purine synthesis, and for DNA precursor synthesis. This is Dihydrofolate reductase (folA) from Staphylococcus aureus (strain MW2).